The following is a 572-amino-acid chain: Bilirubin oxidase (572 aa).

A signal peptide spans 1-19 (MFKHTLGAAALSLLFNSNA). Residues 20–38 (VQASPVPETSPATGHLFKR) constitute a propeptide that is removed on maturation. Plastocyanin-like domains lie at 98–194 (VGYD…YMLT) and 404–526 (VAFA…VFVD). Residues His-132, His-134, His-172, His-174, His-436, His-439, His-441, His-494, Cys-495, His-496, His-500, and Met-505 each coordinate Cu cation. Asn-510 and Asn-520 each carry an N-linked (GlcNAc...) asparagine glycan.

This sequence belongs to the multicopper oxidase family. It depends on Cu cation as a cofactor.

It catalyses the reaction 2 (4Z,15Z)-bilirubin IXalpha + O2 = 2 biliverdin IXalpha + 2 H2O. Oxidation of bilirubin and other tetrapyrroles. The polypeptide is Bilirubin oxidase (Albifimbria verrucaria (Myrothecium leaf spot and pod blight fungus)).